The primary structure comprises 421 residues: Bestrophin homolog 2 (421 aa).

4 consecutive transmembrane segments (helical) span residues 28–48 (IWKAIYMETIIFLICYGIISV), 73–93 (LSFIPLEFVLGFFVTIVVDRW), 239–259 (LMYPQLVCLAVNLYFLVSIIA), and 275–295 (VYFPVMTFLQFIFYMGWLKVI).

Belongs to the anion channel-forming bestrophin (TC 1.A.46) family. Calcium-sensitive chloride channel subfamily. Forms oligomers.

The protein resides in the cell membrane. In terms of biological role, forms chloride channels. In Caenorhabditis elegans, this protein is Bestrophin homolog 2 (best-2).